The chain runs to 381 residues: Alkanesulfonate monooxygenase (381 aa).

The protein belongs to the SsuD family. Homotetramer.

It catalyses the reaction an alkanesulfonate + FMNH2 + O2 = an aldehyde + FMN + sulfite + H2O + 2 H(+). Catalyzes the desulfonation of aliphatic sulfonates. In Enterobacter sp. (strain 638), this protein is Alkanesulfonate monooxygenase.